The following is a 129-amino-acid chain: Glycine cleavage system H protein (129 aa).

The region spanning L24–R106 is the Lipoyl-binding domain. K65 carries the N6-lipoyllysine modification.

This sequence belongs to the GcvH family. In terms of assembly, the glycine cleavage system is composed of four proteins: P, T, L and H. Requires (R)-lipoate as cofactor.

Its function is as follows. The glycine cleavage system catalyzes the degradation of glycine. The H protein shuttles the methylamine group of glycine from the P protein to the T protein. In Synechococcus sp. (strain CC9605), this protein is Glycine cleavage system H protein.